Reading from the N-terminus, the 690-residue chain is MPRQHAIEDYRNFGIMAHIDAGKTTTTERILYYTGKSHKIGETHEGAATMDWMAQEQERGITITSAATTAFWNGKRLNIIDTPGHVDFTIEVERSLRVLDGAVCVLDSNQGVEPQTETVWRQGDKYKVPRIVFCNKMDKTGADFYKCLADIVDRLGARPVAVQLPIGAESAFKGMVDLVRMKALVWNIDSAGAMYDIEEIPADLADKAREYREKLVEAAVELDDNAMAAYLDGTEPDEATLKNLIRKGVITGAFYPVLCGTAFKNKGVQPLLDAVVDFLPSPLDVPAIKGTDDKGNEILRHADDKEPMSLLAFKIMDDPFVGTITFCRIYSGILQSGTGVVNSTREKKERIGRMLLMHANNREDIKEAYAGDIVALAGLKEARTGDTLCDPAHPVILEKMEFPDPVIEIAIEPKSKADQEKLGVALAKLAAEDPSFRVSTDQESGQTILKGMGELHLDIKVDILRRTYKVDANIGAPQVAFRERVTKRVEHSYTHKKQTGGTGQFAAVTLIVEPSEPGKGYEFESKIVGGAVPKEYIPGVEKGIESVLGSGVVAGFPVVDVKVQLIDGKFHDVDSSALAFEIATRACFREALQKGKSVLLEPIMKVEVVTPEDYTGSVIGDLNSRRGQIQGQDMRGNANVINAMVPLMNMFGYVNNLRSMSQGRATFTMQFDHYAEAPANVSAEVQKKFA.

The 276-residue stretch at 8–283 (EDYRNFGIMA…AVVDFLPSPL (276 aa)) folds into the tr-type G domain. GTP-binding positions include 17–24 (AHIDAGKT), 81–85 (DTPGH), and 135–138 (NKMD).

It belongs to the TRAFAC class translation factor GTPase superfamily. Classic translation factor GTPase family. EF-G/EF-2 subfamily.

The protein resides in the cytoplasm. Its function is as follows. Catalyzes the GTP-dependent ribosomal translocation step during translation elongation. During this step, the ribosome changes from the pre-translocational (PRE) to the post-translocational (POST) state as the newly formed A-site-bound peptidyl-tRNA and P-site-bound deacylated tRNA move to the P and E sites, respectively. Catalyzes the coordinated movement of the two tRNA molecules, the mRNA and conformational changes in the ribosome. The protein is Elongation factor G of Nitrobacter hamburgensis (strain DSM 10229 / NCIMB 13809 / X14).